Here is a 760-residue protein sequence, read N- to C-terminus: MALPSLGQDSWSLLRVFFFQLFLLPSLPPASGTGGQGPMPRVKYHAGDGHRALSFFQQKGLRDFDTLLLSDDGNTLYVGAREAVLALNIQNPGIPRLKNMIPWPASERKKTECAFKKKSNETQCFNFIRVLVSYNATHLYACGTFAFSPACTFIELQDSLLLPILIDKVMDGKGQSPFDPVHKHTAVLVDGMLYSGTMNNFLGSEPILMRTLGSQPVLKTDIFLRWLHADASFVAAIPSTQVVYFFFEETASEFDFFEELYISRVAQVCKNDVGGEKLLQKKWTTFLKAQLLCAQPGQLPFNIIRHAVLLPADSPSVSRIYAVFTSQWQVGGTRSSAVCAFSLTDIERVFKGKYKELNKETSRWTTYRGSEVSPRPGSCSMGPSSDKALTFMKDHFLMDEHVVGTPLLVKSGVEYTRLAVESARGLDGSSHVVMYLGTSTGSLHKAVVPQDSSAYLVEEIQLSPDSEPVRNLQLAPAQGAVFAGFSGGIWRVPRANCSVYESCVDCVLARDPHCAWDPESRLCSLLSGSTKPWKQDMERGNPEWVCTRGPMARSPRRQSPPQLIKEVLTVPNSILELPCPHLSALASYHWSHGRAKISEASATVYNGSLLLLPQDGVGGLYQCVATENGYSYPVVSYWVDSQDQPLALDPELAGVPRERVQVPLTRVGGGASMAAQRSYWPHFLIVTVLLAIVLLGVLTLLLASPLGALRARGKVQGCGMLPPREKAPLSRDQHLQPSKDHRTSASDVDADNNHLGAEVA.

An N-terminal signal peptide occupies residues 1-32; sequence MALPSLGQDSWSLLRVFFFQLFLLPSLPPASG. Topologically, residues 33-682 are extracellular; it reads TGGQGPMPRV…MAAQRSYWPH (650 aa). Residues 36 to 494 form the Sema domain; sequence QGPMPRVKYH…FSGGIWRVPR (459 aa). Cys-113 and Cys-124 are oxidised to a cystine. Asn-120 and Asn-135 each carry an N-linked (GlcNAc...) asparagine glycan. 3 disulfide bridges follow: Cys-142/Cys-151, Cys-269/Cys-379, and Cys-293/Cys-339. Residue Asn-496 is glycosylated (N-linked (GlcNAc...) asparagine). One can recognise a PSI domain in the interval 496–547; the sequence is NCSVYESCVDCVLARDPHCAWDPESRLCSLLSGSTKPWKQDMERGNPEWVCT. Intrachain disulfides connect Cys-497–Cys-514, Cys-506–Cys-523, and Cys-579–Cys-623. The Ig-like C2-type domain maps to 572 to 630; the sequence is NSILELPCPHLSALASYHWSHGRAKISEASATVYNGSLLLLPQDGVGGLYQCVATENGY. N-linked (GlcNAc...) asparagine glycosylation occurs at Asn-606. The helical transmembrane segment at 683-703 threads the bilayer; sequence FLIVTVLLAIVLLGVLTLLLA. Residues 704–760 lie on the Cytoplasmic side of the membrane; the sequence is SPLGALRARGKVQGCGMLPPREKAPLSRDQHLQPSKDHRTSASDVDADNNHLGAEVA. The tract at residues 720 to 760 is disordered; it reads MLPPREKAPLSRDQHLQPSKDHRTSASDVDADNNHLGAEVA. Basic and acidic residues predominate over residues 723-744; it reads PREKAPLSRDQHLQPSKDHRTS.

It belongs to the semaphorin family. In terms of assembly, interacts with PLXNB1, PLXNB2 and PLXNB3. Interacts with PLXND1. Interacts with TIMD2. In terms of tissue distribution, expressed in neurons and glia in the developing hippocampus.

The protein localises to the cell membrane. In terms of biological role, cell surface receptor for PLXNB1, PLXNB2, PLXNB3 and PLXND1 that plays an important role in cell-cell signaling. Regulates glutamatergic and GABAergic synapse development. Promotes the development of inhibitory synapses in a PLXNB1-dependent manner and promotes the development of excitatory synapses in a PLXNB2-dependent manner. Plays a role in priming antigen-specific T-cells, promotes differentiation of Th1 T-helper cells, and thereby contributes to adaptive immunity. Promotes phosphorylation of TIMD2. Inhibits angiogenesis. Promotes axon growth cone collapse. Inhibits axonal extension by providing local signals to specify territories inaccessible for growing axons. The sequence is that of Semaphorin-4A (Sema4a) from Mus musculus (Mouse).